We begin with the raw amino-acid sequence, 132 residues long: Binder of sperm protein homolog 1 (132 aa).

An N-terminal signal peptide occupies residues 1 to 17; it reads MGSLMLLFVETTRNSSA. Fibronectin type-II domains lie at 40-84 and 85-132; these read VTDG…FCSA and EDFA…KYCE. Intrachain disulfides connect C45–C69, C59–C82, C90–C116, and C104–C131. Residue N53 is glycosylated (N-linked (GlcNAc...) asparagine).

Belongs to the seminal plasma protein family. Expressed only in the epididymis.

It localises to the secreted. Binds sperm in vitro and promotes sperm capacitation. Specifically promotes capacitation induced by high density lipoproteins (HDLs). Also binds heparin, phospholipid liposomes, and weakly to gelatin. Does not bind chondroitin sulfate B. This Homo sapiens (Human) protein is Binder of sperm protein homolog 1 (BSPH1).